Here is a 290-residue protein sequence, read N- to C-terminus: Eukaryotic translation initiation factor 3 subunit G (290 aa).

A disordered region spans residues 1-34; that stretch reads MSRLGNRAADWADDEEFDDPSALPAQQVTTNKDG. One can recognise an RRM domain in the interval 210–288; it reads ATLRVTNVSE…LILRVEFAKR (79 aa).

The protein belongs to the eIF-3 subunit G family. Component of the eukaryotic translation initiation factor 3 (eIF-3) complex.

Its subcellular location is the cytoplasm. Functionally, RNA-binding component of the eukaryotic translation initiation factor 3 (eIF-3) complex, which is involved in protein synthesis of a specialized repertoire of mRNAs and, together with other initiation factors, stimulates binding of mRNA and methionyl-tRNAi to the 40S ribosome. The eIF-3 complex specifically targets and initiates translation of a subset of mRNAs involved in cell proliferation. This subunit can bind 18S rRNA. The sequence is that of Eukaryotic translation initiation factor 3 subunit G from Neosartorya fischeri (strain ATCC 1020 / DSM 3700 / CBS 544.65 / FGSC A1164 / JCM 1740 / NRRL 181 / WB 181) (Aspergillus fischerianus).